The primary structure comprises 273 residues: Phosphate import ATP-binding protein PstB (273 aa).

The segment at 1-20 (MTTVSTAAASGPAVPPPRID) is disordered. In terms of domain architecture, ABC transporter spans 27-268 (VAARNLNFYY…PSDRRTQDYI (242 aa)). ATP is bound at residue 59–66 (GPSGCGKS).

This sequence belongs to the ABC transporter superfamily. Phosphate importer (TC 3.A.1.7) family. The complex is composed of two ATP-binding proteins (PstB), two transmembrane proteins (PstC and PstA) and a solute-binding protein (PstS).

Its subcellular location is the cell inner membrane. It catalyses the reaction phosphate(out) + ATP + H2O = ADP + 2 phosphate(in) + H(+). Part of the ABC transporter complex PstSACB involved in phosphate import. Responsible for energy coupling to the transport system. The sequence is that of Phosphate import ATP-binding protein PstB from Nitrobacter winogradskyi (strain ATCC 25391 / DSM 10237 / CIP 104748 / NCIMB 11846 / Nb-255).